We begin with the raw amino-acid sequence, 299 residues long: Protein LacX, plasmid (299 aa).

This is Protein LacX, plasmid (lacX) from Lactococcus lactis subsp. lactis (Streptococcus lactis).